An 868-amino-acid chain; its full sequence is Coatomer subunit gamma (868 aa).

A compositionally biased stretch (basic residues) spans 1-11 (MWRTKRGRTRR). A disordered region spans residues 1-22 (MWRTKRGRTRRRDAGGNPWQNL). HEAT repeat units follow at residues 64 to 101 (REAT…IADD), 287 to 324 (RELS…LHPP), 326 to 359 (VNVC…GAES), and 360 to 396 (SVER…KFPR).

It belongs to the COPG family. In terms of assembly, oligomeric complex that consists of at least the alpha, beta, beta', gamma, delta, epsilon and zeta subunits.

The protein localises to the cytoplasm. It localises to the golgi apparatus membrane. Its subcellular location is the cytoplasmic vesicle. It is found in the COPI-coated vesicle membrane. The protein resides in the endoplasmic reticulum. Functionally, the coatomer is a cytosolic protein complex that binds to dilysine motifs and reversibly associates with Golgi non-clathrin-coated vesicles, which further mediate biosynthetic protein transport from the ER, via the Golgi up to the trans Golgi network. Coatomer complex is required for budding from Golgi membranes, and is essential for the retrograde Golgi-to-ER transport of dilysine-tagged proteins. The protein is Coatomer subunit gamma of Anopheles gambiae (African malaria mosquito).